The following is a 290-amino-acid chain: Light-independent protochlorophyllide reductase iron-sulfur ATP-binding protein (290 aa).

Residues 10-15 and lysine 39 contribute to the ATP site; that span reads GIGKST. Mg(2+) is bound at residue serine 14. Residues cysteine 95 and cysteine 129 each coordinate [4Fe-4S] cluster. 180–181 serves as a coordination point for ATP; the sequence is NR.

Belongs to the NifH/BchL/ChlL family. Homodimer. Protochlorophyllide reductase is composed of three subunits; ChlL, ChlN and ChlB. It depends on [4Fe-4S] cluster as a cofactor.

Its subcellular location is the plastid. The protein resides in the chloroplast. It carries out the reaction chlorophyllide a + oxidized 2[4Fe-4S]-[ferredoxin] + 2 ADP + 2 phosphate = protochlorophyllide a + reduced 2[4Fe-4S]-[ferredoxin] + 2 ATP + 2 H2O. It participates in porphyrin-containing compound metabolism; chlorophyll biosynthesis (light-independent). Component of the dark-operative protochlorophyllide reductase (DPOR) that uses Mg-ATP and reduced ferredoxin to reduce ring D of protochlorophyllide (Pchlide) to form chlorophyllide a (Chlide). This reaction is light-independent. The L component serves as a unique electron donor to the NB-component of the complex, and binds Mg-ATP. The protein is Light-independent protochlorophyllide reductase iron-sulfur ATP-binding protein of Anthoceros angustus (Hornwort).